Reading from the N-terminus, the 445-residue chain is Clusterin (445 aa).

An N-terminal signal peptide occupies residues 1-22 (MMKTLLLLVGLLLTWDNGRVLG). Residues 78–81 (KKKK) carry the Nuclear localization signal motif. N-linked (GlcNAc...) asparagine glycans are attached at residues N86 and N103. Intrachain disulfides connect C102–C309, C113–C301, C116–C298, C121–C291, and C129–C281. S133 carries the phosphoserine modification. Residues N145, N277, N287, N350, and N370 are each glycosylated (N-linked (GlcNAc...) asparagine). Position 392 is a phosphoserine (S392). Residues 439–443 (RQKHR) carry the Nuclear localization signal motif.

The protein belongs to the clusterin family. Antiparallel disulfide-linked heterodimer of an alpha chain and a beta chain. Self-associates and forms higher oligomers. Interacts with a broad range of misfolded proteins, including APP, APOC2 and LYZ. Slightly acidic pH promotes interaction with misfolded proteins. Forms high-molecular weight oligomers upon interaction with misfolded proteins. Interacts with APOA1, LRP2, CLUAP1 and PON1. Interacts with the complement membrane attack complex. Interacts (via alpha chain) with XRCC6. Interacts with SYVN1, COMMD1, BTRC, CUL1 and with ubiquitin and SCF (SKP1-CUL1-F-box protein) E3 ubiquitin-protein ligase complexes. Interacts (via alpha chain) with BAX in stressed cells, where BAX undergoes a conformation change leading to association with the mitochondrial membrane. Does not interact with BAX in unstressed cells. Found in a complex with LTF, CLU, EPPIN and SEMG1. Interacts (immaturely glycosylated pre-secreted form) with HSPA5; this interaction promotes CLU stability and facilitates stress-induced CLU retrotranslocation from the secretory pathway to the mitochondria, thereby reducing stress-induced apoptosis by stabilizing mitochondrial membrane integrity. Interacts with BCL2L1; this interaction releases and activates BAX and promotes cell death. Interacts with TGFBR2 and ACVR1. Interacts (secreted form) with STMN3; this interaction may act as an important modulator during neuronal differentiation. Interacts with VLDLR and LRP8. Post-translationally, proteolytically cleaved on its way through the secretory system, probably within the Golgi lumen. Proteolytic cleavage is not necessary for its chaperone activity. All non-secreted forms are not proteolytically cleaved. Chaperone activity of uncleaved forms is dependent on a non-reducing environment. This proteolytic maturation is disulfide bond formation dependent. In terms of processing, polyubiquitinated, leading to proteasomal degradation. Under cellular stress, the intracellular level of cleaved form is reduced due to proteasomal degradation. Heavily N-glycosylated. About 30% of the protein mass is comprised of complex N-linked carbohydrate. Endoplasmic reticulum (ER) stress induces changes in glycosylation status and increases level of hypoglycosylated forms. Core carbohydrates are essential for chaperone activity. Non-secreted forms are hypoglycosylated or unglycosylated.

It localises to the secreted. It is found in the nucleus. Its subcellular location is the cytoplasm. The protein resides in the mitochondrion membrane. The protein localises to the cytosol. It localises to the microsome. It is found in the endoplasmic reticulum. Its subcellular location is the mitochondrion. The protein resides in the perinuclear region. The protein localises to the cytoplasmic vesicle. It localises to the secretory vesicle. It is found in the chromaffin granule. Functions as extracellular chaperone that prevents aggregation of non native proteins. Prevents stress-induced aggregation of blood plasma proteins. Inhibits formation of amyloid fibrils by APP, APOC2, B2M, CALCA, CSN3, SNCA and aggregation-prone LYZ variants (in vitro). Does not require ATP. Maintains partially unfolded proteins in a state appropriate for subsequent refolding by other chaperones, such as HSPA8/HSC70. Does not refold proteins by itself. Binding to cell surface receptors triggers internalization of the chaperone-client complex and subsequent lysosomal or proteasomal degradation. When secreted, protects cells against apoptosis and against cytolysis by complement: inhibits assembly of the complement membrane attack complex (MAC) by preventing polymerization of C9 pore component of the MAC complex. Intracellular forms interact with ubiquitin and SCF (SKP1-CUL1-F-box protein) E3 ubiquitin-protein ligase complexes and promote the ubiquitination and subsequent proteasomal degradation of target proteins. Promotes proteasomal degradation of COMMD1 and IKBKB. Modulates NF-kappa-B transcriptional activity. Following stress, promotes apoptosis. Inhibits apoptosis when associated with the mitochondrial membrane by interference with BAX-dependent release of cytochrome c into the cytoplasm. Plays a role in the regulation of cell proliferation. An intracellular form suppresses stress-induced apoptosis by stabilizing mitochondrial membrane integrity through interaction with HSPA5. Secreted form does not affect caspase or BAX-mediated intrinsic apoptosis and TNF-induced NF-kappa-B-activity. Secreted form act as an important modulator during neuronal differentiation through interaction with STMN3. Plays a role in the clearance of immune complexes that arise during cell injury. The chain is Clusterin (CLU) from Canis lupus familiaris (Dog).